Consider the following 858-residue polypeptide: Leucine--tRNA ligase (858 aa).

The 'HIGH' region motif lies at 42–52 (PYPSGRLHMGH). A 'KMSKS' region motif is present at residues 618-622 (KMSKS). Lysine 621 is a binding site for ATP.

It belongs to the class-I aminoacyl-tRNA synthetase family.

The protein localises to the cytoplasm. It catalyses the reaction tRNA(Leu) + L-leucine + ATP = L-leucyl-tRNA(Leu) + AMP + diphosphate. This Vibrio cholerae serotype O1 (strain ATCC 39541 / Classical Ogawa 395 / O395) protein is Leucine--tRNA ligase.